A 199-amino-acid chain; its full sequence is Charged multivesicular body protein 1b (199 aa).

Coiled coils occupy residues 15-42 (AKELHRNAKKCEKEEKTEKAKIKKAIQK) and 178-199 (TSVASTEQDELSQRLARLRDQV). The segment at 167–199 (ELPQGQTGSVGTSVASTEQDELSQRLARLRDQV) is disordered. The span at 170-183 (QGQTGSVGTSVAST) shows a compositional bias: polar residues. Positions 186 to 196 (DELSQRLARLR) match the MIT-interacting motif motif.

The protein belongs to the SNF7 family.

It localises to the cytoplasm. The protein localises to the cytosol. It is found in the endosome. Its subcellular location is the late endosome membrane. Functionally, probable peripherally associated component of the endosomal sorting required for transport complex III (ESCRT-III) which is involved in multivesicular bodies (MVBs) formation and sorting of endosomal cargo proteins into MVBs. MVBs contain intraluminal vesicles (ILVs) that are generated by invagination and scission from the limiting membrane of the endosome and mostly are delivered to lysosomes enabling degradation of membrane proteins, such as stimulated growth factor receptors, lysosomal enzymes and lipids. This Xenopus tropicalis (Western clawed frog) protein is Charged multivesicular body protein 1b (chmp1b).